The sequence spans 166 residues: Putative lipoprotein Lxx21020 (166 aa).

An N-terminal signal peptide occupies residues 1–22 (MTKTTRLLRATTVAAILLGLTG). Cysteine 23 carries the N-palmitoyl cysteine lipid modification. Residue cysteine 23 is the site of S-diacylglycerol cysteine attachment.

It localises to the cell membrane. The polypeptide is Putative lipoprotein Lxx21020 (Leifsonia xyli subsp. xyli (strain CTCB07)).